We begin with the raw amino-acid sequence, 346 residues long: S-adenosylmethionine:tRNA ribosyltransferase-isomerase (346 aa).

This sequence belongs to the QueA family. In terms of assembly, monomer.

It localises to the cytoplasm. The catalysed reaction is 7-aminomethyl-7-carbaguanosine(34) in tRNA + S-adenosyl-L-methionine = epoxyqueuosine(34) in tRNA + adenine + L-methionine + 2 H(+). It functions in the pathway tRNA modification; tRNA-queuosine biosynthesis. In terms of biological role, transfers and isomerizes the ribose moiety from AdoMet to the 7-aminomethyl group of 7-deazaguanine (preQ1-tRNA) to give epoxyqueuosine (oQ-tRNA). The chain is S-adenosylmethionine:tRNA ribosyltransferase-isomerase from Nitrosomonas eutropha (strain DSM 101675 / C91 / Nm57).